The primary structure comprises 486 residues: Transmembrane protein 39A (486 aa).

N-linked (GlcNAc...) asparagine glycosylation occurs at Asn31. Transmembrane regions (helical) follow at residues 72-92, 110-130, 155-175, 182-202, 285-305, 317-337, 418-438, and 444-464; these read SLFFEFLFFIYLLIVLFIQYI, TSLNFHLIDYYLAAFITVMLA, LILARLVLLTLCGWVLCWTLV, SVLNLLFLGYPFGVYVPLYCF, EVLFNSLFSAYYVAFLPLCFV, CEHLIMVWINAFVMLTTQLLP, VLNLLILIEGSVVFYQLYSLL, and NHTLSMALILFCNYYVLFKLL.

The protein belongs to the TMEM39 family. Interacts with SACM1L, SEC23A and SEC24A.

It is found in the endoplasmic reticulum membrane. Functionally, regulates autophagy by controlling the spatial distribution and levels of the intracellular phosphatidylinositol 4-phosphate (PtdIns(4)P) pools. Modulates (PtdIns(4)P) levels by regulating the ER-to-Golgi trafficking of the phosphatidylinositide phosphatase SACM1L. The sequence is that of Transmembrane protein 39A (Tmem39a) from Mus musculus (Mouse).